The following is a 420-amino-acid chain: Nucleobindin-2 (420 aa).

The N-terminal stretch at 1-24 (MRWRIIQVQYCFLLVPCMLTALEA) is a signal peptide. The DNA-binding element occupies 171-223 (RTRHEEFKKYEMMKEHERREYLKTLSEEKRKEEESKFEEMKRKHEDHPKVNHP). Residues 193-225 (KTLSEEKRKEEESKFEEMKRKHEDHPKVNHPGS) form a disordered region. Positions 213–420 (KHEDHPKVNH…AGELKFEPHT (208 aa)) are binds to necdin. EF-hand domains follow at residues 241–276 (PNDF…ELEK) and 293–328 (ERLR…KEFL). Residues D254, N256, D258, E265, D306, N308, D310, and E317 each contribute to the Ca(2+) site. The GBA signature appears at 304–334 (EIDNNKDRLVTLEEFLRATEKKEFLEPDSWE). Residue S332 is modified to Phosphoserine. The span at 365 to 389 (AEELQKQKEDLQRQHDHLEAQKQEY) shows a compositional bias: basic and acidic residues. Positions 365 to 420 (AEELQKQKEDLQRQHDHLEAQKQEYHQAVQHLEQKKLQQGIAPSGPAGELKFEPHT) are disordered.

This sequence belongs to the nucleobindin family. Interacts (via GBA motif) with guanine nucleotide-binding protein G(i) alpha subunit GNAI3. Preferentially interacts with inactive rather than active GNAI3. Interaction with GNAI3 is inhibited when NUCB2 binds calcium, probably due to a conformational change which renders the GBA motif inaccessible. Binds to the postmitotic growth suppressor NDN; coexpression abolishes NUCB2 secretion. Interacts with MC4R. In terms of tissue distribution, found in liver, heart, thymus, muscle, intestine, kidney, lung, spleen and throughout the brain, in cerebral cortex, hippocampus, hypothalamus and medulla oblongata. Nucb2 and necdin levels were higher in postmitotic neurons.

The protein localises to the cytoplasm. Its subcellular location is the perikaryon. The protein resides in the endoplasmic reticulum. It is found in the golgi apparatus. It localises to the nucleus envelope. The protein localises to the membrane. Its subcellular location is the secreted. Calcium-binding protein which may have a role in calcium homeostasis. Acts as a non-receptor guanine nucleotide exchange factor which binds to and activates guanine nucleotide-binding protein (G-protein) alpha subunit GNAI3. In terms of biological role, anorexigenic peptide, seems to play an important role in hypothalamic pathways regulating food intake and energy homeostasis, acting in a leptin-independent manner. May also exert hypertensive roles and modulate blood pressure through directly acting on peripheral arterial resistance. In intestinal epithelial cells, plays a role in the inhibition of hepatic glucose production via MC4R receptor leading to increased cyclic adenosine monophosphate (cAMP) levels and glucagon-like peptide 1 (GLP-1) secretion. The chain is Nucleobindin-2 (Nucb2) from Mus musculus (Mouse).